A 232-amino-acid chain; its full sequence is Ubiquinone biosynthesis O-methyltransferase (232 aa).

Residues Arg36, Gly55, Asp76, and Met120 each coordinate S-adenosyl-L-methionine.

Belongs to the methyltransferase superfamily. UbiG/COQ3 family.

It catalyses the reaction a 3-demethylubiquinol + S-adenosyl-L-methionine = a ubiquinol + S-adenosyl-L-homocysteine + H(+). It carries out the reaction a 3-(all-trans-polyprenyl)benzene-1,2-diol + S-adenosyl-L-methionine = a 2-methoxy-6-(all-trans-polyprenyl)phenol + S-adenosyl-L-homocysteine + H(+). It functions in the pathway cofactor biosynthesis; ubiquinone biosynthesis. O-methyltransferase that catalyzes the 2 O-methylation steps in the ubiquinone biosynthetic pathway. The chain is Ubiquinone biosynthesis O-methyltransferase from Paraburkholderia phymatum (strain DSM 17167 / CIP 108236 / LMG 21445 / STM815) (Burkholderia phymatum).